Here is a 141-residue protein sequence, read N- to C-terminus: Large ribosomal subunit protein uL11 (141 aa).

It belongs to the universal ribosomal protein uL11 family. As to quaternary structure, part of the ribosomal stalk of the 50S ribosomal subunit. Interacts with L10 and the large rRNA to form the base of the stalk. L10 forms an elongated spine to which L12 dimers bind in a sequential fashion forming a multimeric L10(L12)X complex. One or more lysine residues are methylated.

Functionally, forms part of the ribosomal stalk which helps the ribosome interact with GTP-bound translation factors. In Chloroflexus aggregans (strain MD-66 / DSM 9485), this protein is Large ribosomal subunit protein uL11.